The chain runs to 441 residues: Tubulin beta-1 chain (441 aa).

8 residues coordinate GTP: Gln11, Glu69, Ser138, Gly142, Thr143, Gly144, Asn204, and Asn226. Glu69 is a binding site for Mg(2+).

It belongs to the tubulin family. As to quaternary structure, dimer of alpha and beta chains. A typical microtubule is a hollow water-filled tube with an outer diameter of 25 nm and an inner diameter of 15 nM. Alpha-beta heterodimers associate head-to-tail to form protofilaments running lengthwise along the microtubule wall with the beta-tubulin subunit facing the microtubule plus end conferring a structural polarity. Microtubules usually have 13 protofilaments but different protofilament numbers can be found in some organisms and specialized cells. Mg(2+) is required as a cofactor. As to expression, expressed primarily in touch receptor neurons.

Its subcellular location is the cytoplasm. The protein resides in the cytoskeleton. Functionally, tubulin is the major constituent of microtubules, a cylinder consisting of laterally associated linear protofilaments composed of alpha- and beta-tubulin heterodimers. Microtubules grow by the addition of GTP-tubulin dimers to the microtubule end, where a stabilizing cap forms. Below the cap, tubulin dimers are in GDP-bound state, owing to GTPase activity of alpha-tubulin. Plays a role in mechanosensory transduction (touch sensitivity). Its function is as follows. Mec-7 beta-tubulin is required for the production of 15-protofilament microtubules. The polypeptide is Tubulin beta-1 chain (mec-7) (Caenorhabditis briggsae).